The primary structure comprises 325 residues: UPF0285 protein MmarC7_1666 (325 aa).

The protein belongs to the UPF0285 family.

The chain is UPF0285 protein MmarC7_1666 from Methanococcus maripaludis (strain C7 / ATCC BAA-1331).